A 210-amino-acid chain; its full sequence is uncharacterized protein (210 aa).

The next 5 helical transmembrane spans lie at 42-62, 66-86, 126-146, 147-167, and 189-209; these read ITLG…VLFV, ALHG…GFLM, VVVY…EMWQ, IILA…VISL, and AGIV…NEII.

This sequence belongs to the Rht family.

It is found in the cell membrane. This is an uncharacterized protein from Haemophilus influenzae (strain ATCC 51907 / DSM 11121 / KW20 / Rd).